The primary structure comprises 441 residues: Putative F-box/FBD/LRR-repeat protein At4g00315 (441 aa).

The 47-residue stretch at 1–47 (MDKTSQLPDELLVKVLSFLPTKDAVRTSLLSMRWKSLWMWLPKLEYD) folds into the F-box domain. LRR repeat units follow at residues 57-82 (QGLA…SLKL), 87-115 (IGSI…SLKL), 137-164 (ILKL…FLGR), 165-190 (VTYS…VVER), 211-236 (LKMS…KVTD), 243-271 (SDNE…DFVL), 293-318 (LGVY…KICS), and 319-344 (CDSD…EAYV). The 53-residue stretch at 358 to 410 (QWGNQLNCVPKCLLSSLETFKWSEMYGLLQNQMDVAKYILRNARCLKSATIFF) folds into the FBD domain.

The polypeptide is Putative F-box/FBD/LRR-repeat protein At4g00315 (Arabidopsis thaliana (Mouse-ear cress)).